The chain runs to 583 residues: Radixin (583 aa).

An FERM domain is found at 5 to 295 (INVRVTTMDA…GNHELYMRRR (291 aa)). 60–63 (KLNK) is an a 1,2-diacyl-sn-glycero-3-phospho-(1D-myo-inositol) binding site. Lysine 83 carries the post-translational modification N6-succinyllysine. Lysine 278 serves as a coordination point for a 1,2-diacyl-sn-glycero-3-phospho-(1D-myo-inositol). 3 disordered regions span residues 310–330 (REEKHQKQLERAQLENEKKKR), 376–407 (DQERKRAKEEAERLEKERRAAEEAKSAIAKQA), and 462–526 (ELKT…RVKK). The span at 376–400 (DQERKRAKEEAERLEKERRAAEEAK) shows a compositional bias: basic and acidic residues. A compositionally biased stretch (pro residues) spans 469–480 (APPPPPPPPVIP). Composition is skewed to basic and acidic residues over residues 483–492 (ENEHDEHDEN) and 506–525 (MNHRSEEERVTETQKNERVK). At threonine 564 the chain carries Phosphothreonine; by ROCK2.

Binds NHERF1. Interacts with NHERF1, NHERF2, LAYN, MME/NEP and ICAM2. Interacts with CPNE1 (via VWFA domain) and CPNE4 (via VWFA domain). Interacts (via FERM domain) with SPN/CD43 cytoplasmic tail. Interacts with CD44. Interacts with CLIC5; may work together in a complex which also includes EZR and MYO6 to stabilize linkages between the plasma membrane and subjacent actin cytoskeleton at the base of stereocilia. In terms of processing, phosphorylated by tyrosine-protein kinases. Phosphorylation by ROCK2 suppresses the head-to-tail association of the N-terminal and C-terminal halves resulting in an opened conformation which is capable of actin and membrane-binding.

The protein resides in the cell membrane. It localises to the cytoplasm. It is found in the cytoskeleton. The protein localises to the cleavage furrow. Its subcellular location is the cell projection. The protein resides in the microvillus. It localises to the stereocilium. With respect to regulation, a head-to-tail association, of the N-terminal and C-terminal halves results in a closed conformation (inactive form) which is incapable of actin or membrane-binding. Its function is as follows. Probably plays a crucial role in the binding of the barbed end of actin filaments to the plasma membrane. The chain is Radixin (RDX) from Homo sapiens (Human).